Here is a 98-residue protein sequence, read N- to C-terminus: Large ribosomal subunit protein uL23 (98 aa).

Belongs to the universal ribosomal protein uL23 family. Part of the 50S ribosomal subunit. Contacts protein L29, and trigger factor when it is bound to the ribosome.

In terms of biological role, one of the early assembly proteins it binds 23S rRNA. One of the proteins that surrounds the polypeptide exit tunnel on the outside of the ribosome. Forms the main docking site for trigger factor binding to the ribosome. This is Large ribosomal subunit protein uL23 from Acidothermus cellulolyticus (strain ATCC 43068 / DSM 8971 / 11B).